Consider the following 323-residue polypeptide: ATP synthase gamma chain (323 aa).

Residues 206–240 (NPIVNLVGFGYKERGVKPINNRRATSDIVGESKSI) are insert.

This sequence belongs to the ATPase gamma chain family. As to quaternary structure, F-type ATPases have 2 components, CF(1) - the catalytic core - and CF(0) - the membrane proton channel. CF(1) has five subunits: alpha(3), beta(3), gamma(1), delta(1), epsilon(1). CF(0) has three main subunits: a, b and c.

Its subcellular location is the cell inner membrane. Its function is as follows. Produces ATP from ADP in the presence of a proton gradient across the membrane. The gamma chain is believed to be important in regulating ATPase activity and the flow of protons through the CF(0) complex. The polypeptide is ATP synthase gamma chain (Rickettsia conorii (strain ATCC VR-613 / Malish 7)).